The primary structure comprises 242 residues: Eukaryotic translation initiation factor 3 subunit J (242 aa).

The segment covering 1-10 (MASWDDEDFE) has biased composition (acidic residues). Disordered regions lie at residues 1 to 58 (MASW…KAQR), 71 to 97 (MKLKPEDASTKRDRQRQAELDSDMMNA), and 201 to 242 (REEK…DDFM). A compositionally biased stretch (low complexity) spans 11–21 (VPAAATPAVPA). Residues 23–38 (WDDDEEEDVMDSWDAE) show a composition bias toward acidic residues. Positions 71–89 (MKLKPEDASTKRDRQRQAE) are enriched in basic and acidic residues.

It belongs to the eIF-3 subunit J family. In terms of assembly, component of the eukaryotic translation initiation factor 3 (eIF-3) complex.

It is found in the cytoplasm. Component of the eukaryotic translation initiation factor 3 (eIF-3) complex, which is involved in protein synthesis of a specialized repertoire of mRNAs and, together with other initiation factors, stimulates binding of mRNA and methionyl-tRNAi to the 40S ribosome. The eIF-3 complex specifically targets and initiates translation of a subset of mRNAs involved in cell proliferation. This is Eukaryotic translation initiation factor 3 subunit J from Yarrowia lipolytica (strain CLIB 122 / E 150) (Yeast).